We begin with the raw amino-acid sequence, 208 residues long: Holliday junction branch migration complex subunit RuvA (208 aa).

A domain I region spans residues 1 to 69 (MIGFLQGYVV…EDQMVLFGFA (69 aa)). The tract at residues 70-148 (VVAERDLFRQ…EWRDQAGLKT (79 aa)) is domain II. The segment at 149 to 159 (LPSAGPIDSVQ) is flexible linker. The domain III stretch occupies residues 159–208 (QEDVEMTLLALGYTSQEVMRALQAVGQNTALAKNSDTEAWIREAIAWLSQ).

Belongs to the RuvA family. Homotetramer. Forms an RuvA(8)-RuvB(12)-Holliday junction (HJ) complex. HJ DNA is sandwiched between 2 RuvA tetramers; dsDNA enters through RuvA and exits via RuvB. An RuvB hexamer assembles on each DNA strand where it exits the tetramer. Each RuvB hexamer is contacted by two RuvA subunits (via domain III) on 2 adjacent RuvB subunits; this complex drives branch migration. In the full resolvosome a probable DNA-RuvA(4)-RuvB(12)-RuvC(2) complex forms which resolves the HJ.

The protein localises to the cytoplasm. Its function is as follows. The RuvA-RuvB-RuvC complex processes Holliday junction (HJ) DNA during genetic recombination and DNA repair, while the RuvA-RuvB complex plays an important role in the rescue of blocked DNA replication forks via replication fork reversal (RFR). RuvA specifically binds to HJ cruciform DNA, conferring on it an open structure. The RuvB hexamer acts as an ATP-dependent pump, pulling dsDNA into and through the RuvAB complex. HJ branch migration allows RuvC to scan DNA until it finds its consensus sequence, where it cleaves and resolves the cruciform DNA. The sequence is that of Holliday junction branch migration complex subunit RuvA from Acaryochloris marina (strain MBIC 11017).